Reading from the N-terminus, the 712-residue chain is Probable GTP diphosphokinase RSH3, chloroplastic (712 aa).

A chloroplast-targeting transit peptide spans 1-64 (MVVATTIALY…LLFSGASVKS (64 aa)). Positions 65 to 74 (SSSSSSSHPS) are enriched in low complexity. The disordered stretch occupies residues 65–84 (SSSSSSSHPSVGEELASIRH). Positions 237–338 (YLQHCVETAM…IKLADRLHNM (102 aa)) constitute an HD domain.

Belongs to the RelA/SpoT family.

Its subcellular location is the plastid. It localises to the chloroplast. It carries out the reaction GTP + ATP = guanosine 3'-diphosphate 5'-triphosphate + AMP. In terms of biological role, probable ppGpp (guanosine 3'-diphosphate 5'-diphosphate) synthetase that may be involved in a rapid plant ppGpp-mediated response to pathogens and other stresses. The polypeptide is Probable GTP diphosphokinase RSH3, chloroplastic (RSH3) (Arabidopsis thaliana (Mouse-ear cress)).